The chain runs to 548 residues: Beta-caryophyllene synthase (548 aa).

The (2E,6E)-farnesyl diphosphate site is built by Arg268, Asp305, Asp309, Arg446, and Asp449. Asp305 and Asp309 together coordinate Mg(2+). The short motif at 305–309 (DDIYD) is the DDXXD motif element. Asp449 and Glu457 together coordinate Mg(2+).

Belongs to the terpene synthase family. It depends on Mg(2+) as a cofactor.

It carries out the reaction (2E,6E)-farnesyl diphosphate = (-)-(E)-beta-caryophyllene + diphosphate. The protein operates within secondary metabolite biosynthesis; terpenoid biosynthesis. In terms of biological role, sesquiterpene synthase that catalyzes the formation of sesquiterpenes and sesquiterpenoid alcohols. Converts farnesyl diphosphate (FPP) to beta-caryophyllene. Can use geranyl diphosphate (GPP) to produce myrcene, limonene and camphene. The protein is Beta-caryophyllene synthase of Lavandula angustifolia (Lavender).